The primary structure comprises 274 residues: AA9 family lytic polysaccharide monooxygenase A (274 aa).

A signal peptide spans 1–22; the sequence is MHVPQFISTGALLALLARPAAA. His23 lines the Cu(2+) pocket. Cys63 and Cys194 are joined by a disulfide. The (1,4-beta-D-glucosyl)n site is built by Gly67, Asp98, and Ser100. His101 provides a ligand contact to Cu(2+). An O2-binding site is contributed by His174. Asp177 lines the (1,4-beta-D-glucosyl)n pocket. Tyr191 provides a ligand contact to Cu(2+).

This sequence belongs to the polysaccharide monooxygenase AA9 family. It depends on Cu(2+) as a cofactor.

The protein localises to the secreted. The catalysed reaction is [(1-&gt;4)-beta-D-glucosyl]n+m + reduced acceptor + O2 = 4-dehydro-beta-D-glucosyl-[(1-&gt;4)-beta-D-glucosyl]n-1 + [(1-&gt;4)-beta-D-glucosyl]m + acceptor + H2O.. Its function is as follows. Lytic polysaccharide monooxygenase (LPMO) that depolymerizes crystalline and amorphous polysaccharides via the oxidation of scissile alpha- or beta-(1-4)-glycosidic bonds, yielding C4 oxidation products. Catalysis by LPMOs requires the reduction of the active-site copper from Cu(II) to Cu(I) by a reducing agent and H(2)O(2) or O(2) as a cosubstrate. Cleaves a range of polysaccharides, including cellulose, xyloglucan, mixed-linkage glucan and glucomannan. The polypeptide is AA9 family lytic polysaccharide monooxygenase A (Collariella virescens (Soil fungus)).